We begin with the raw amino-acid sequence, 377 residues long: Pyruvate dehydrogenase E1 component subunit alpha, mitochondrial (377 aa).

Residues 1-26 (MLSNFLKVNSKALGHIRTFASKSGEI) constitute a mitochondrion transit peptide. His-83, Tyr-109, Arg-110, Gly-156, Val-158, Asp-187, Gly-188, Ala-189, Asn-216, and Tyr-218 together coordinate pyruvate. Positions 109, 110, 156, 158, 187, 188, 189, and 216 each coordinate thiamine diphosphate. Asp-187 contacts Mg(2+). The Mg(2+) site is built by Asn-216 and Tyr-218. Residue His-283 coordinates thiamine diphosphate.

In terms of assembly, tetramer of 2 alpha and 2 beta subunits. Thiamine diphosphate serves as cofactor. Mg(2+) is required as a cofactor.

The protein resides in the mitochondrion matrix. It catalyses the reaction N(6)-[(R)-lipoyl]-L-lysyl-[protein] + pyruvate + H(+) = N(6)-[(R)-S(8)-acetyldihydrolipoyl]-L-lysyl-[protein] + CO2. Its activity is regulated as follows. E1 activity is regulated by phosphorylation (inactivation) and dephosphorylation (activation) of the alpha subunit. The pyruvate dehydrogenase complex catalyzes the overall conversion of pyruvate to acetyl-CoA and CO(2). It contains multiple copies of three enzymatic components: pyruvate dehydrogenase (E1), dihydrolipoamide acetyltransferase (E2) and lipoamide dehydrogenase (E3). The polypeptide is Pyruvate dehydrogenase E1 component subunit alpha, mitochondrial (pdhA) (Dictyostelium discoideum (Social amoeba)).